A 291-amino-acid polypeptide reads, in one-letter code: 4-hydroxy-tetrahydrodipicolinate synthase (291 aa).

Thr44 is a pyruvate binding site. Tyr132 serves as the catalytic Proton donor/acceptor. Lys160 acts as the Schiff-base intermediate with substrate in catalysis. Ile202 lines the pyruvate pocket.

The protein belongs to the DapA family. In terms of assembly, homotetramer; dimer of dimers.

It localises to the cytoplasm. The enzyme catalyses L-aspartate 4-semialdehyde + pyruvate = (2S,4S)-4-hydroxy-2,3,4,5-tetrahydrodipicolinate + H2O + H(+). The protein operates within amino-acid biosynthesis; L-lysine biosynthesis via DAP pathway; (S)-tetrahydrodipicolinate from L-aspartate: step 3/4. In terms of biological role, catalyzes the condensation of (S)-aspartate-beta-semialdehyde [(S)-ASA] and pyruvate to 4-hydroxy-tetrahydrodipicolinate (HTPA). The polypeptide is 4-hydroxy-tetrahydrodipicolinate synthase (Rhodospirillum centenum (strain ATCC 51521 / SW)).